The primary structure comprises 470 residues: Sorting nexin-17 (470 aa).

The PX domain occupies 1–109 (MHFSIPETES…SFLRRAQQET (109 aa)). A 1,2-diacyl-sn-glycero-3-phospho-(1D-myo-inositol-3-phosphate) contacts are provided by Arg36, Ser38, Lys62, and Arg75. The region spanning 115–206 (EEVSLEVLLS…YKIVLRKSYW (92 aa)) is the Ras-associating domain. Positions 115 to 432 (EEVSLEVLLS…DATRESMVKL (318 aa)) are FERM-like. A PTB-like F3 module region spans residues 270–432 (GYLRFDACVA…DATRESMVKL (163 aa)). Phosphoserine occurs at positions 336, 407, 409, 415, 421, 437, and 440. The disordered stretch occupies residues 401 to 426 (GGTLRRSDSQQAVKSPPLLESPDATR). Residues 458–470 (GNFAFEGIGDEDL) form an interacts with the retriever complex region.

This sequence belongs to the sorting nexin family. As to quaternary structure, monomer. Interacts with APP (via cytoplasmic YXNPXY motif). Interacts with KIF1B. Interacts with the C-termini of P-selectin, PTC, LDLR, VLDLR, LRP1 and LRP8. Interacts with KRIT1 (via N-terminus). Interacts with HRAS. Interacts with ITGB1 and ITGB5 (via NPxY motif). Interacts with CCDC22 and CCDC93; the interaction associates SNX17 with the CCC complex. Interacts (via C-terminus) with VPS26C and VPS35L; the interactions are direct and associate SNX17 with the retriever complex.

It localises to the cytoplasm. The protein resides in the early endosome. The protein localises to the cytoplasmic vesicle membrane. In terms of biological role, critical regulator of endosomal recycling of numerous surface proteins, including integrins, signaling receptor and channels. Binds to NPxY sequences in the cytoplasmic tails of target cargos. Associates with retriever and CCC complexes to prevent lysosomal degradation and promote cell surface recycling of numerous cargos such as integrins ITGB1, ITGB5 and their associated alpha subunits. Also required for maintenance of normal cell surface levels of APP and LRP1. Interacts with membranes containing phosphatidylinositol 3-phosphate (PtdIns(3P)). The chain is Sorting nexin-17 (SNX17) from Homo sapiens (Human).